Consider the following 660-residue polypeptide: Bifunctional polymyxin resistance protein ArnA (660 aa).

The tract at residues 1–304 (MKAVIFAYHD…ALGLVKGALL (304 aa)) is formyltransferase ArnAFT. H104 functions as the Proton donor; for formyltransferase activity in the catalytic mechanism. Residues R114 and 136 to 140 (TARAD) each bind (6R)-10-formyltetrahydrofolate. Residues 314-660 (RRTRVLILGV…QTVDLPDAAQ (347 aa)) are dehydrogenase ArnADH. Residues D347 and 368–369 (DI) contribute to the NAD(+) site. UDP-alpha-D-glucuronate is bound by residues A393, Y398, and 432–433 (TS). E434 acts as the Proton acceptor; for decarboxylase activity in catalysis. UDP-alpha-D-glucuronate-binding positions include R460, N492, 526–535 (KLVDGGAQKR), and Y613. The active-site Proton donor; for decarboxylase activity is R619.

In the N-terminal section; belongs to the Fmt family. UDP-L-Ara4N formyltransferase subfamily. This sequence in the C-terminal section; belongs to the NAD(P)-dependent epimerase/dehydratase family. UDP-glucuronic acid decarboxylase subfamily. In terms of assembly, homohexamer, formed by a dimer of trimers.

The enzyme catalyses UDP-alpha-D-glucuronate + NAD(+) = UDP-beta-L-threo-pentopyranos-4-ulose + CO2 + NADH. The catalysed reaction is UDP-4-amino-4-deoxy-beta-L-arabinose + (6R)-10-formyltetrahydrofolate = UDP-4-deoxy-4-formamido-beta-L-arabinose + (6S)-5,6,7,8-tetrahydrofolate + H(+). It functions in the pathway nucleotide-sugar biosynthesis; UDP-4-deoxy-4-formamido-beta-L-arabinose biosynthesis; UDP-4-deoxy-4-formamido-beta-L-arabinose from UDP-alpha-D-glucuronate: step 1/3. The protein operates within nucleotide-sugar biosynthesis; UDP-4-deoxy-4-formamido-beta-L-arabinose biosynthesis; UDP-4-deoxy-4-formamido-beta-L-arabinose from UDP-alpha-D-glucuronate: step 3/3. Its pathway is bacterial outer membrane biogenesis; lipopolysaccharide biosynthesis. Bifunctional enzyme that catalyzes the oxidative decarboxylation of UDP-glucuronic acid (UDP-GlcUA) to UDP-4-keto-arabinose (UDP-Ara4O) and the addition of a formyl group to UDP-4-amino-4-deoxy-L-arabinose (UDP-L-Ara4N) to form UDP-L-4-formamido-arabinose (UDP-L-Ara4FN). The modified arabinose is attached to lipid A and is required for resistance to polymyxin and cationic antimicrobial peptides. The chain is Bifunctional polymyxin resistance protein ArnA from Sodalis glossinidius (strain morsitans).